The primary structure comprises 367 residues: Trans-enoyl reductase opdC (367 aa).

NADP(+)-binding positions include 47 to 50 (YDAK), 199 to 202 (SPHN), tyrosine 217, 264 to 265 (LD), and 353 to 354 (IT).

The protein belongs to the zinc-containing alcohol dehydrogenase family. Monomer.

Its pathway is secondary metabolite biosynthesis. In terms of biological role, trans-enoyl reductase; part of the gene cluster that mediates the biosynthesis of oxopyrrolidines, polyketide-amino acid hybrid compounds with feature structures of tetramic acid. The polyketide chain is first assembled by the highly reducing PKS module of opdA using acetyl-CoA as the starter unit and five malonyl-CoA as the extender units. OpdC acts as a trans-acting enoyl reductase and reduces the terminal alkenyl to alkane. The 17R in oxopyrrolidine A and 15R, 17S in oxopyrrolidine B are generated by non-stereospecific catalysis of the ketoreductase (KR) domain and enoyl reductases. Then the polyketides with specific configurations are transferred to the NRPS module of opdA and linked to L-tyrosine to form an amide bond. Finally, the oxopyrrolidines are offloaded through a Dieckmann cyclization catalyzed by the terminal D domain to give a tetramic acid moiety. This Penicillium oxalicum (strain 114-2 / CGMCC 5302) (Penicillium decumbens) protein is Trans-enoyl reductase opdC.